The chain runs to 57 residues: DNA-directed RNA polymerase subunit Rpo6 (57 aa).

The protein belongs to the archaeal Rpo6/eukaryotic RPB6 RNA polymerase subunit family. Part of the RNA polymerase complex.

It is found in the cytoplasm. It localises to the chromosome. The enzyme catalyses RNA(n) + a ribonucleoside 5'-triphosphate = RNA(n+1) + diphosphate. In terms of biological role, DNA-dependent RNA polymerase (RNAP) catalyzes the transcription of DNA into RNA using the four ribonucleoside triphosphates as substrates. The sequence is that of DNA-directed RNA polymerase subunit Rpo6 from Thermococcus kodakarensis (strain ATCC BAA-918 / JCM 12380 / KOD1) (Pyrococcus kodakaraensis (strain KOD1)).